We begin with the raw amino-acid sequence, 227 residues long: Cytochrome c oxidase subunit 2 (227 aa).

At 1-14 (MAYPVQLGFQDAAS) the chain is on the mitochondrial intermembrane side. A helical membrane pass occupies residues 15–45 (PIMEELLYFHDHTLMIMFLISSLVLYIISLM). Residues 46 to 59 (LTTELMHTNTMDAQ) lie on the Mitochondrial matrix side of the membrane. Residues 60–87 (EVETVWTILPAAILILIALPSLRILYMM) traverse the membrane as a helical segment. Residues 88–227 (DEITTPSLTL…HFEEWLLSML (140 aa)) lie on the Mitochondrial intermembrane side of the membrane. His161, Cys196, Glu198, Cys200, His204, and Met207 together coordinate Cu cation. Glu198 lines the Mg(2+) pocket.

This sequence belongs to the cytochrome c oxidase subunit 2 family. As to quaternary structure, component of the cytochrome c oxidase (complex IV, CIV), a multisubunit enzyme composed of 14 subunits. The complex is composed of a catalytic core of 3 subunits MT-CO1, MT-CO2 and MT-CO3, encoded in the mitochondrial DNA, and 11 supernumerary subunits COX4I, COX5A, COX5B, COX6A, COX6B, COX6C, COX7A, COX7B, COX7C, COX8 and NDUFA4, which are encoded in the nuclear genome. The complex exists as a monomer or a dimer and forms supercomplexes (SCs) in the inner mitochondrial membrane with NADH-ubiquinone oxidoreductase (complex I, CI) and ubiquinol-cytochrome c oxidoreductase (cytochrome b-c1 complex, complex III, CIII), resulting in different assemblies (supercomplex SCI(1)III(2)IV(1) and megacomplex MCI(2)III(2)IV(2)). Found in a complex with TMEM177, COA6, COX18, COX20, SCO1 and SCO2. Interacts with TMEM177 in a COX20-dependent manner. Interacts with COX20. Interacts with COX16. The cofactor is Cu cation.

The protein resides in the mitochondrion inner membrane. It catalyses the reaction 4 Fe(II)-[cytochrome c] + O2 + 8 H(+)(in) = 4 Fe(III)-[cytochrome c] + 2 H2O + 4 H(+)(out). In terms of biological role, component of the cytochrome c oxidase, the last enzyme in the mitochondrial electron transport chain which drives oxidative phosphorylation. The respiratory chain contains 3 multisubunit complexes succinate dehydrogenase (complex II, CII), ubiquinol-cytochrome c oxidoreductase (cytochrome b-c1 complex, complex III, CIII) and cytochrome c oxidase (complex IV, CIV), that cooperate to transfer electrons derived from NADH and succinate to molecular oxygen, creating an electrochemical gradient over the inner membrane that drives transmembrane transport and the ATP synthase. Cytochrome c oxidase is the component of the respiratory chain that catalyzes the reduction of oxygen to water. Electrons originating from reduced cytochrome c in the intermembrane space (IMS) are transferred via the dinuclear copper A center (CU(A)) of subunit 2 and heme A of subunit 1 to the active site in subunit 1, a binuclear center (BNC) formed by heme A3 and copper B (CU(B)). The BNC reduces molecular oxygen to 2 water molecules using 4 electrons from cytochrome c in the IMS and 4 protons from the mitochondrial matrix. The chain is Cytochrome c oxidase subunit 2 (MT-CO2) from Lemur catta (Ring-tailed lemur).